A 77-amino-acid polypeptide reads, in one-letter code: EMBRYO SURROUNDING FACTOR 1-like protein 9 (77 aa).

The signal sequence occupies residues 1 to 22 (MSSSRFLILCIILISFFPLHEC). Intrachain disulfides connect Cys38–Cys54, Cys43–Cys75, Cys52–Cys71, and Cys55–Cys64.

The protein belongs to the MEG family. Expressed in flowers.

The sequence is that of EMBRYO SURROUNDING FACTOR 1-like protein 9 (ESFL9) from Arabidopsis thaliana (Mouse-ear cress).